Reading from the N-terminus, the 503-residue chain is tRNA-2-methylthio-N(6)-dimethylallyladenosine synthase (503 aa).

An MTTase N-terminal domain is found at 5-121 (RSYEIRTFGC…LPVLLERARH (117 aa)). [4Fe-4S] cluster contacts are provided by cysteine 14, cysteine 50, cysteine 84, cysteine 158, cysteine 162, and cysteine 165. The region spanning 144–380 (RESAYAGWVS…IALQEEISLA (237 aa)) is the Radical SAM core domain. In terms of domain architecture, TRAM spans 383–453 (RELIGTEVEL…PHHLIADAPV (71 aa)).

The protein belongs to the methylthiotransferase family. MiaB subfamily. As to quaternary structure, monomer. [4Fe-4S] cluster serves as cofactor.

The protein localises to the cytoplasm. It carries out the reaction N(6)-dimethylallyladenosine(37) in tRNA + (sulfur carrier)-SH + AH2 + 2 S-adenosyl-L-methionine = 2-methylsulfanyl-N(6)-dimethylallyladenosine(37) in tRNA + (sulfur carrier)-H + 5'-deoxyadenosine + L-methionine + A + S-adenosyl-L-homocysteine + 2 H(+). Its function is as follows. Catalyzes the methylthiolation of N6-(dimethylallyl)adenosine (i(6)A), leading to the formation of 2-methylthio-N6-(dimethylallyl)adenosine (ms(2)i(6)A) at position 37 in tRNAs that read codons beginning with uridine. In Nocardia farcinica (strain IFM 10152), this protein is tRNA-2-methylthio-N(6)-dimethylallyladenosine synthase.